A 101-amino-acid polypeptide reads, in one-letter code: Urease subunit beta (101 aa).

The protein belongs to the urease beta subunit family. Heterotrimer of UreA (gamma), UreB (beta) and UreC (alpha) subunits. Three heterotrimers associate to form the active enzyme.

The protein localises to the cytoplasm. The catalysed reaction is urea + 2 H2O + H(+) = hydrogencarbonate + 2 NH4(+). It functions in the pathway nitrogen metabolism; urea degradation; CO(2) and NH(3) from urea (urease route): step 1/1. This is Urease subunit beta from Rhizobium johnstonii (strain DSM 114642 / LMG 32736 / 3841) (Rhizobium leguminosarum bv. viciae).